Consider the following 408-residue polypeptide: Multidrug resistance protein MdtG (408 aa).

The next 11 helical transmembrane spans lie at L16–F36, I58–A78, L92–I112, A115–V135, T146–A166, P173–I193, L224–L244, V256–P276, I290–T310, F319–N339, and A378–L398.

The protein belongs to the major facilitator superfamily. DHA1 family. MdtG (TC 2.A.1.2.20) subfamily.

The protein resides in the cell inner membrane. Functionally, confers resistance to fosfomycin and deoxycholate. The polypeptide is Multidrug resistance protein MdtG (Escherichia coli O81 (strain ED1a)).